The chain runs to 380 residues: Guanine nucleotide-binding protein subunit beta (380 aa).

WD repeat units follow at residues 64 to 94, 106 to 136, 155 to 186, 203 to 234, 247 to 277, 296 to 326, and 342 to 372; these read GHSG…IVWN, LHCP…SIFN, GHKG…VLWD, GHTA…RLWD, GHED…RLFD, NELP…YVWD, and SHDG…KIWA.

It belongs to the WD repeat G protein beta family. G proteins are composed of 3 units, alpha, beta and gamma. In terms of tissue distribution, present in the root, leaf and tassel.

Its function is as follows. Guanine nucleotide-binding proteins (G proteins) are involved as a modulator or transducer in various transmembrane signaling systems. The beta and gamma chains are required for the GTPase activity, for replacement of GDP by GTP, and for G protein-effector interaction. This Zea mays (Maize) protein is Guanine nucleotide-binding protein subunit beta (GB1).